The following is a 257-amino-acid chain: Imidazole glycerol phosphate synthase subunit HisF (257 aa).

Residues Asp-11 and Asp-130 contribute to the active site.

This sequence belongs to the HisA/HisF family. As to quaternary structure, heterodimer of HisH and HisF.

It is found in the cytoplasm. It catalyses the reaction 5-[(5-phospho-1-deoxy-D-ribulos-1-ylimino)methylamino]-1-(5-phospho-beta-D-ribosyl)imidazole-4-carboxamide + L-glutamine = D-erythro-1-(imidazol-4-yl)glycerol 3-phosphate + 5-amino-1-(5-phospho-beta-D-ribosyl)imidazole-4-carboxamide + L-glutamate + H(+). It functions in the pathway amino-acid biosynthesis; L-histidine biosynthesis; L-histidine from 5-phospho-alpha-D-ribose 1-diphosphate: step 5/9. In terms of biological role, IGPS catalyzes the conversion of PRFAR and glutamine to IGP, AICAR and glutamate. The HisF subunit catalyzes the cyclization activity that produces IGP and AICAR from PRFAR using the ammonia provided by the HisH subunit. The chain is Imidazole glycerol phosphate synthase subunit HisF from Psychromonas ingrahamii (strain DSM 17664 / CCUG 51855 / 37).